The sequence spans 552 residues: uncharacterized protein (552 aa).

A disordered region spans residues 1–59; sequence MPLEKTNTHDSTATVEDQEATDNPMHLTQSRMLDLAGNPNRTTSRQSETLFPNGVDLNY. Positions 39–50 are enriched in polar residues; the sequence is PNRTTSRQSETL. 12 helical membrane passes run 116 to 136, 158 to 178, 181 to 201, 203 to 223, 238 to 258, 271 to 291, 345 to 365, 383 to 403, 424 to 444, 450 to 470, 484 to 506, and 519 to 539; these read ITIV…VIAG, LMVV…EMIG, IVYL…ALAP, IACL…PLTL, GLAI…GPLV, WIFW…LPVP, ILVC…GYFF, GLMF…TPFL, LVGM…FAWT, IWIG…LFYF, CASA…PLFI, and FFLL…FYLF.

Belongs to the major facilitator superfamily.

It is found in the membrane. This is an uncharacterized protein from Schizosaccharomyces pombe (strain 972 / ATCC 24843) (Fission yeast).